A 216-amino-acid chain; its full sequence is Redox-sensing transcriptional repressor Rex (216 aa).

The segment at residues 20-59 (QYYRLFKSLVEENVTRTNSQLISEKIGVDAATIRRDFSLF) is a DNA-binding region (H-T-H motif). 94–99 (GVGNLG) contributes to the NAD(+) binding site.

It belongs to the transcriptional regulatory Rex family. In terms of assembly, homodimer.

The protein localises to the cytoplasm. Its function is as follows. Modulates transcription in response to changes in cellular NADH/NAD(+) redox state. This is Redox-sensing transcriptional repressor Rex from Lactococcus lactis subsp. cremoris (strain SK11).